Consider the following 189-residue polypeptide: Ribosomal RNA large subunit methyltransferase E (189 aa).

The S-adenosyl-L-methionine site is built by Gly45, Phe47, Asp64, Asp82, and Asp104. Catalysis depends on Lys144, which acts as the Proton acceptor.

Belongs to the class I-like SAM-binding methyltransferase superfamily. RNA methyltransferase RlmE family.

The protein resides in the cytoplasm. It carries out the reaction uridine(2552) in 23S rRNA + S-adenosyl-L-methionine = 2'-O-methyluridine(2552) in 23S rRNA + S-adenosyl-L-homocysteine + H(+). Its function is as follows. Specifically methylates the uridine in position 2552 of 23S rRNA at the 2'-O position of the ribose in the fully assembled 50S ribosomal subunit. The polypeptide is Ribosomal RNA large subunit methyltransferase E (Borreliella afzelii (strain PKo) (Borrelia afzelii)).